The primary structure comprises 372 residues: tRNA-specific 2-thiouridylase MnmA (372 aa).

ATP-binding positions include 11 to 18 (GMSGGVDS) and methionine 37. The segment at 97-99 (NPD) is interaction with target base in tRNA. Residue cysteine 102 is the Nucleophile of the active site. Cysteines 102 and 199 form a disulfide. Glycine 126 serves as a coordination point for ATP. Positions 149-151 (KDQ) are interaction with tRNA. Cysteine 199 functions as the Cysteine persulfide intermediate in the catalytic mechanism. Positions 309–310 (RY) are interaction with tRNA.

It belongs to the MnmA/TRMU family.

It is found in the cytoplasm. It carries out the reaction S-sulfanyl-L-cysteinyl-[protein] + uridine(34) in tRNA + AH2 + ATP = 2-thiouridine(34) in tRNA + L-cysteinyl-[protein] + A + AMP + diphosphate + H(+). In terms of biological role, catalyzes the 2-thiolation of uridine at the wobble position (U34) of tRNA, leading to the formation of s(2)U34. This chain is tRNA-specific 2-thiouridylase MnmA, found in Staphylococcus aureus (strain bovine RF122 / ET3-1).